The following is a 251-amino-acid chain: Imidazole glycerol phosphate synthase subunit HisF (251 aa).

Active-site residues include Asp-11 and Asp-130.

Belongs to the HisA/HisF family. Heterodimer of HisH and HisF.

Its subcellular location is the cytoplasm. The enzyme catalyses 5-[(5-phospho-1-deoxy-D-ribulos-1-ylimino)methylamino]-1-(5-phospho-beta-D-ribosyl)imidazole-4-carboxamide + L-glutamine = D-erythro-1-(imidazol-4-yl)glycerol 3-phosphate + 5-amino-1-(5-phospho-beta-D-ribosyl)imidazole-4-carboxamide + L-glutamate + H(+). The protein operates within amino-acid biosynthesis; L-histidine biosynthesis; L-histidine from 5-phospho-alpha-D-ribose 1-diphosphate: step 5/9. In terms of biological role, IGPS catalyzes the conversion of PRFAR and glutamine to IGP, AICAR and glutamate. The HisF subunit catalyzes the cyclization activity that produces IGP and AICAR from PRFAR using the ammonia provided by the HisH subunit. In Chlorobaculum tepidum (strain ATCC 49652 / DSM 12025 / NBRC 103806 / TLS) (Chlorobium tepidum), this protein is Imidazole glycerol phosphate synthase subunit HisF.